The sequence spans 269 residues: Hydroxyacylglutathione hydrolase (269 aa).

Zn(2+) is bound by residues His-56, His-58, Asp-60, His-61, His-115, Asp-137, and His-177.

The protein belongs to the metallo-beta-lactamase superfamily. Glyoxalase II family. As to quaternary structure, monomer. It depends on Zn(2+) as a cofactor.

The catalysed reaction is an S-(2-hydroxyacyl)glutathione + H2O = a 2-hydroxy carboxylate + glutathione + H(+). It functions in the pathway secondary metabolite metabolism; methylglyoxal degradation; (R)-lactate from methylglyoxal: step 2/2. Functionally, thiolesterase that catalyzes the hydrolysis of S-D-lactoyl-glutathione to form glutathione and D-lactic acid. This is Hydroxyacylglutathione hydrolase from Leptospira borgpetersenii serovar Hardjo-bovis (strain JB197).